Here is a 251-residue protein sequence, read N- to C-terminus: Imidazole glycerol phosphate synthase subunit HisF (251 aa).

Catalysis depends on residues Asp11 and Asp130.

Belongs to the HisA/HisF family. Heterodimer of HisH and HisF.

The protein resides in the cytoplasm. The catalysed reaction is 5-[(5-phospho-1-deoxy-D-ribulos-1-ylimino)methylamino]-1-(5-phospho-beta-D-ribosyl)imidazole-4-carboxamide + L-glutamine = D-erythro-1-(imidazol-4-yl)glycerol 3-phosphate + 5-amino-1-(5-phospho-beta-D-ribosyl)imidazole-4-carboxamide + L-glutamate + H(+). The protein operates within amino-acid biosynthesis; L-histidine biosynthesis; L-histidine from 5-phospho-alpha-D-ribose 1-diphosphate: step 5/9. In terms of biological role, IGPS catalyzes the conversion of PRFAR and glutamine to IGP, AICAR and glutamate. The HisF subunit catalyzes the cyclization activity that produces IGP and AICAR from PRFAR using the ammonia provided by the HisH subunit. This is Imidazole glycerol phosphate synthase subunit HisF from Prosthecochloris aestuarii (strain DSM 271 / SK 413).